Here is a 101-residue protein sequence, read N- to C-terminus: Iron-sulfur cluster assembly protein CyaY (101 aa).

Belongs to the frataxin family.

Functionally, involved in iron-sulfur (Fe-S) cluster assembly. May act as a regulator of Fe-S biogenesis. This chain is Iron-sulfur cluster assembly protein CyaY, found in Actinobacillus pleuropneumoniae serotype 5b (strain L20).